The chain runs to 31 residues: Cyclotide cter-D (31 aa).

The segment at residues 1 to 31 (GIPCAESCVWIPCTVTALLGCSCKDKVCYLN) is a cross-link (cyclopeptide (Gly-Asn)). Intrachain disulfides connect cysteine 4–cysteine 21, cysteine 8–cysteine 23, and cysteine 13–cysteine 28.

Post-translationally, contains 3 disulfide bonds. In terms of processing, this is a cyclic peptide. As to expression, expressed in root, seed and nodule but not in flower, stem, shoot, leaf and pod.

In terms of biological role, probably participates in a plant defense mechanism. The chain is Cyclotide cter-D from Clitoria ternatea (Butterfly pea).